The chain runs to 154 residues: 6,7-dimethyl-8-ribityllumazine synthase (154 aa).

Residues Phe-26, 60–62 (ALE), and 84–86 (CII) each bind 5-amino-6-(D-ribitylamino)uracil. Residue 89–90 (ET) participates in (2S)-2-hydroxy-3-oxobutyl phosphate binding. Catalysis depends on His-92, which acts as the Proton donor. Asn-117 lines the 5-amino-6-(D-ribitylamino)uracil pocket. Arg-131 provides a ligand contact to (2S)-2-hydroxy-3-oxobutyl phosphate.

Belongs to the DMRL synthase family.

The enzyme catalyses (2S)-2-hydroxy-3-oxobutyl phosphate + 5-amino-6-(D-ribitylamino)uracil = 6,7-dimethyl-8-(1-D-ribityl)lumazine + phosphate + 2 H2O + H(+). Its pathway is cofactor biosynthesis; riboflavin biosynthesis; riboflavin from 2-hydroxy-3-oxobutyl phosphate and 5-amino-6-(D-ribitylamino)uracil: step 1/2. Its function is as follows. Catalyzes the formation of 6,7-dimethyl-8-ribityllumazine by condensation of 5-amino-6-(D-ribitylamino)uracil with 3,4-dihydroxy-2-butanone 4-phosphate. This is the penultimate step in the biosynthesis of riboflavin. The chain is 6,7-dimethyl-8-ribityllumazine synthase from Acidovorax ebreus (strain TPSY) (Diaphorobacter sp. (strain TPSY)).